A 510-amino-acid polypeptide reads, in one-letter code: Protein phosphatase EYA3 (510 aa).

Disordered regions lie at residues 1–32 and 175–233; these read MQEP…SNLS and YQTE…DASS. The span at 7–16 shows a compositional bias: polar residues; it reads QTLSQVNNPD. Residues 192–203 show a composition bias toward low complexity; that stretch reads LPSDSSASPPLS. S199 and S203 each carry phosphoserine. D246 (nucleophile) is an active-site residue. Residues D246 and D248 each coordinate Mg(2+). The Proton donor role is filled by D248. A phosphoserine mark is found at S375 and S409. Residue D474 participates in Mg(2+) binding.

This sequence belongs to the HAD-like hydrolase superfamily. EYA family. As to quaternary structure, interacts with SIX1 and DACH1, and probably SIX2, SIX4 and SIX5. Mg(2+) is required as a cofactor. Ser-203 phosphorylation is required for localization at sites of DNA damage and directing interaction with H2AX. As to expression, expressed in branchial arches, CNS and developing eye.

It is found in the cytoplasm. The protein resides in the nucleus. The catalysed reaction is O-phospho-L-tyrosyl-[protein] + H2O = L-tyrosyl-[protein] + phosphate. Tyrosine phosphatase that specifically dephosphorylates 'Tyr-142' of histone H2AX (H2AXY142ph). 'Tyr-142' phosphorylation of histone H2AX plays a central role in DNA repair and acts as a mark that distinguishes between apoptotic and repair responses to genotoxic stress. Promotes efficient DNA repair by dephosphorylating H2AX, promoting the recruitment of DNA repair complexes containing MDC1. Its function as histone phosphatase probably explains its role in transcription regulation during organogenesis. The phosphatase activity has been shown in vitro. Coactivates SIX1. Seems to coactivate SIX2, SIX4 and SIX5. The repression of precursor cell proliferation in myoblasts by SIX1 is switched to activation through recruitment of EYA3 to the SIX1-DACH1 complex and seems to be dependent on EYA3 phosphatase activity. May be involved in development of the eye. May play a role in mediating the induction and differentiation of cranial placodes. This Mus musculus (Mouse) protein is Protein phosphatase EYA3 (Eya3).